The primary structure comprises 334 residues: Probable fructose-bisphosphate aldolase class 1 (334 aa).

This sequence belongs to the class I fructose-bisphosphate aldolase family.

It carries out the reaction beta-D-fructose 1,6-bisphosphate = D-glyceraldehyde 3-phosphate + dihydroxyacetone phosphate. It functions in the pathway carbohydrate degradation; glycolysis; D-glyceraldehyde 3-phosphate and glycerone phosphate from D-glucose: step 4/4. The chain is Probable fructose-bisphosphate aldolase class 1 from Xanthomonas campestris pv. campestris (strain ATCC 33913 / DSM 3586 / NCPPB 528 / LMG 568 / P 25).